The primary structure comprises 56 residues: Large ribosomal subunit protein bL33 (56 aa).

Belongs to the bacterial ribosomal protein bL33 family.

This chain is Large ribosomal subunit protein bL33, found in Marinomonas sp. (strain MWYL1).